A 953-amino-acid polypeptide reads, in one-letter code: TPR repeat-containing protein ZIP4 (953 aa).

The stretch at 129-162 (ASFFHRSGLAWLDLGRVDLASACFEKATPLVSAA) is one TPR 1 repeat. Residues 248–269 (AASPSSSSPRTPPYGGATPKTP) are disordered. TPR repeat units lie at residues 432-465 (HALL…VSRD) and 473-506 (ADCF…EPNI). The tract at residues 924–953 (RVSGDEPDECSQEEAPKASISGSMSQPVLV) is disordered. Polar residues predominate over residues 943 to 953 (ISGSMSQPVLV).

It is found in the nucleus. The protein resides in the chromosome. Its function is as follows. Required for crossover formation, complete synapsis of homologous chromosomes and bivalent formation during meiosis. Is specific to recombination events resulting in interference-sensitive crossovers (class I meiotic crossover) and works cooperatively with MER3 to promote crossovers. In Oryza sativa subsp. indica (Rice), this protein is TPR repeat-containing protein ZIP4.